The chain runs to 259 residues: Thiazole synthase (259 aa).

The active-site Schiff-base intermediate with DXP is Lys-95. Residues Gly-156, 183 to 184, and 205 to 206 contribute to the 1-deoxy-D-xylulose 5-phosphate site; these read AG and NS.

Belongs to the ThiG family. As to quaternary structure, homotetramer. Forms heterodimers with either ThiH or ThiS.

It is found in the cytoplasm. The catalysed reaction is [ThiS sulfur-carrier protein]-C-terminal-Gly-aminoethanethioate + 2-iminoacetate + 1-deoxy-D-xylulose 5-phosphate = [ThiS sulfur-carrier protein]-C-terminal Gly-Gly + 2-[(2R,5Z)-2-carboxy-4-methylthiazol-5(2H)-ylidene]ethyl phosphate + 2 H2O + H(+). Its pathway is cofactor biosynthesis; thiamine diphosphate biosynthesis. Functionally, catalyzes the rearrangement of 1-deoxy-D-xylulose 5-phosphate (DXP) to produce the thiazole phosphate moiety of thiamine. Sulfur is provided by the thiocarboxylate moiety of the carrier protein ThiS. In vitro, sulfur can be provided by H(2)S. The chain is Thiazole synthase from Coxiella burnetii (strain RSA 331 / Henzerling II).